The primary structure comprises 240 residues: UDP-2,3-diacylglucosamine hydrolase (240 aa).

Residues aspartate 8, histidine 10, aspartate 41, asparagine 79, and histidine 114 each contribute to the Mn(2+) site. 79–80 contacts substrate; the sequence is NR. The substrate site is built by aspartate 122, serine 160, asparagine 164, lysine 167, and histidine 195. Mn(2+) contacts are provided by histidine 195 and histidine 197.

It belongs to the LpxH family. Mn(2+) serves as cofactor.

It is found in the cell inner membrane. The enzyme catalyses UDP-2-N,3-O-bis[(3R)-3-hydroxytetradecanoyl]-alpha-D-glucosamine + H2O = 2-N,3-O-bis[(3R)-3-hydroxytetradecanoyl]-alpha-D-glucosaminyl 1-phosphate + UMP + 2 H(+). Its pathway is glycolipid biosynthesis; lipid IV(A) biosynthesis; lipid IV(A) from (3R)-3-hydroxytetradecanoyl-[acyl-carrier-protein] and UDP-N-acetyl-alpha-D-glucosamine: step 4/6. Functionally, hydrolyzes the pyrophosphate bond of UDP-2,3-diacylglucosamine to yield 2,3-diacylglucosamine 1-phosphate (lipid X) and UMP by catalyzing the attack of water at the alpha-P atom. Involved in the biosynthesis of lipid A, a phosphorylated glycolipid that anchors the lipopolysaccharide to the outer membrane of the cell. This is UDP-2,3-diacylglucosamine hydrolase from Escherichia coli O6:H1 (strain CFT073 / ATCC 700928 / UPEC).